A 648-amino-acid chain; its full sequence is Acetyl-coenzyme A synthetase (648 aa).

CoA contacts are provided by residues 190–193 (RGGK), Thr308, and Asn332. Residues 384 to 386 (GEP), 408 to 413 (DTWWQT), Asp497, and Arg512 each bind ATP. Ser520 serves as a coordination point for CoA. Arg523 contacts ATP. The Mg(2+) site is built by Val534, His536, and Val539. CoA is bound at residue Arg581. At Lys606 the chain carries N6-acetyllysine.

The protein belongs to the ATP-dependent AMP-binding enzyme family. Mg(2+) is required as a cofactor. In terms of processing, acetylated. Deacetylation by the SIR2-homolog deacetylase activates the enzyme.

It catalyses the reaction acetate + ATP + CoA = acetyl-CoA + AMP + diphosphate. In terms of biological role, catalyzes the conversion of acetate into acetyl-CoA (AcCoA), an essential intermediate at the junction of anabolic and catabolic pathways. AcsA undergoes a two-step reaction. In the first half reaction, AcsA combines acetate with ATP to form acetyl-adenylate (AcAMP) intermediate. In the second half reaction, it can then transfer the acetyl group from AcAMP to the sulfhydryl group of CoA, forming the product AcCoA. The polypeptide is Acetyl-coenzyme A synthetase (Bradyrhizobium diazoefficiens (strain JCM 10833 / BCRC 13528 / IAM 13628 / NBRC 14792 / USDA 110)).